The sequence spans 270 residues: Nuclear receptor-interacting protein 2 (270 aa).

The segment covering 1–27 has biased composition (basic and acidic residues); it reads MSTGQEARRDEGDSRKEQEASLRDRAH. Residues 1 to 33 form a disordered region; the sequence is MSTGQEARRDEGDSRKEQEASLRDRAHLSQQRQ. Residues 61–99 form an interaction with NR1F2 region; that stretch reads KDLQPHSVIQRRLVEGNQRRLQGESPLLQALIRGHDSSR. Positions 192–196 match the LXXLL motif motif; that stretch reads LQTLL.

Interacts with NR1F2, RARA and THRB in a ligand-dependent manner. In terms of tissue distribution, expression is restricted to the central nervous system (neurons in the dentate gyrus of the hippocampus, the amygdala, thalamic and hypothalamic regions).

Its subcellular location is the nucleus. Down-regulates transcriptional activation by nuclear receptors, such as NR1F2. The protein is Nuclear receptor-interacting protein 2 (Nrip2) of Mus musculus (Mouse).